Reading from the N-terminus, the 486-residue chain is UDP-N-acetylmuramoyl-L-alanyl-D-glutamate--2,6-diaminopimelate ligase (486 aa).

Ser30 provides a ligand contact to UDP-N-acetyl-alpha-D-muramoyl-L-alanyl-D-glutamate. 111-117 (GTNGKTT) is a binding site for ATP. UDP-N-acetyl-alpha-D-muramoyl-L-alanyl-D-glutamate is bound by residues 153–154 (TT), Ser180, Gln186, and Arg188. Lys220 carries the post-translational modification N6-carboxylysine. Meso-2,6-diaminopimelate contacts are provided by residues Arg378, 402–405 (DNPR), Gly455, and Glu459. A Meso-diaminopimelate recognition motif motif is present at residues 402–405 (DNPR).

Belongs to the MurCDEF family. MurE subfamily. Mg(2+) serves as cofactor. Post-translationally, carboxylation is probably crucial for Mg(2+) binding and, consequently, for the gamma-phosphate positioning of ATP.

The protein localises to the cytoplasm. The catalysed reaction is UDP-N-acetyl-alpha-D-muramoyl-L-alanyl-D-glutamate + meso-2,6-diaminopimelate + ATP = UDP-N-acetyl-alpha-D-muramoyl-L-alanyl-gamma-D-glutamyl-meso-2,6-diaminopimelate + ADP + phosphate + H(+). The protein operates within cell wall biogenesis; peptidoglycan biosynthesis. In terms of biological role, catalyzes the addition of meso-diaminopimelic acid to the nucleotide precursor UDP-N-acetylmuramoyl-L-alanyl-D-glutamate (UMAG) in the biosynthesis of bacterial cell-wall peptidoglycan. The chain is UDP-N-acetylmuramoyl-L-alanyl-D-glutamate--2,6-diaminopimelate ligase from Parabacteroides distasonis (strain ATCC 8503 / DSM 20701 / CIP 104284 / JCM 5825 / NCTC 11152).